The sequence spans 388 residues: Chaperone protein DnaJ (388 aa).

Residues 5 to 69 (DYYDVLGVDK…QKRAQYDQFG (65 aa)) enclose the J domain. The CR-type zinc-finger motif lies at 145–227 (GKKTDITYTR…CHGQGTVDKK (83 aa)). Zn(2+) is bound by residues C158, C161, C175, C178, C201, C204, C215, and C218. CXXCXGXG motif repeat units lie at residues 158–165 (CPTCDGSG), 175–182 (CDKCHGSG), 201–208 (CDKCGGRG), and 215–222 (CQTCHGQG).

The protein belongs to the DnaJ family. Homodimer. Zn(2+) is required as a cofactor.

Its subcellular location is the cytoplasm. Functionally, participates actively in the response to hyperosmotic and heat shock by preventing the aggregation of stress-denatured proteins and by disaggregating proteins, also in an autonomous, DnaK-independent fashion. Unfolded proteins bind initially to DnaJ; upon interaction with the DnaJ-bound protein, DnaK hydrolyzes its bound ATP, resulting in the formation of a stable complex. GrpE releases ADP from DnaK; ATP binding to DnaK triggers the release of the substrate protein, thus completing the reaction cycle. Several rounds of ATP-dependent interactions between DnaJ, DnaK and GrpE are required for fully efficient folding. Also involved, together with DnaK and GrpE, in the DNA replication of plasmids through activation of initiation proteins. This is Chaperone protein DnaJ from Lactobacillus johnsonii (strain CNCM I-12250 / La1 / NCC 533).